The sequence spans 171 residues: Transcription antitermination protein NusB (171 aa).

This sequence belongs to the NusB family.

Involved in transcription antitermination. Required for transcription of ribosomal RNA (rRNA) genes. Binds specifically to the boxA antiterminator sequence of the ribosomal RNA (rrn) operons. The polypeptide is Transcription antitermination protein NusB (Brucella melitensis biotype 1 (strain ATCC 23456 / CCUG 17765 / NCTC 10094 / 16M)).